We begin with the raw amino-acid sequence, 357 residues long: G-protein coupled receptor 183 (357 aa).

Residues 1–32 (MANNFTTPLAASHGNNCDLYAHHSTARILMPL) lie on the Extracellular side of the membrane. An N-linked (GlcNAc...) asparagine glycan is attached at N4. The chain crosses the membrane as a helical span at residues 33-53 (HYSLVFIIGLVGNLLALVVIV). Over 54–68 (QNRKKINSTTLYSMN) the chain is Cytoplasmic. Residues 69 to 89 (LVISDILFTTALPTRIVYYAL) traverse the membrane as a helical segment. A 7alpha,25-dihydroxycholesterol-binding site is contributed by R83. Residues 90 to 101 (GFDWRIGDALCR) lie on the Extracellular side of the membrane. C100 and C177 are oxidised to a cystine. Residues 102-122 (ITALLFYINTYAGVNFMTCLS) form a helical membrane-spanning segment. The 7alpha,25-dihydroxycholesterol site is built by Y108 and Y112. Residues 122-130 (SIDRFFAVV) form an interaction with G proteins region. At 123–143 (IDRFFAVVHPLRYNKIKRIEY) the chain is on the cytoplasmic side. Residues 144–164 (AKGICVFVWILVFAQTLPLLL) form a helical membrane-spanning segment. The Extracellular portion of the chain corresponds to 165-190 (KPMSKQEADKTTCMEYPNFEGTASLP). The chain crosses the membrane as a helical span at residues 191 to 211 (WILLGACLLGYVLPLAIILLC). At 212-240 (YSQICCKLFRTAKQNPLTEKSGVNKKALN) the chain is on the cytoplasmic side. A helical membrane pass occupies residues 241 to 261 (TIILIIGVFVLCFTPYHVAIM). Residue Y256 coordinates 7alpha,25-dihydroxycholesterol. The Extracellular portion of the chain corresponds to 262 to 287 (QHMVKTLYAPGALGCGVRHSFQISLH). The chain crosses the membrane as a helical span at residues 288–308 (FTVCLMNFNCCMDPFIYFFAC). Residues 309–357 (KGYKRKVMKMLKRQVSVSISSAVRSAPEENSREMTESQMMIHSKASNGR) lie on the Cytoplasmic side of the membrane. S324 and S345 each carry phosphoserine. The tract at residues 336–357 (EENSREMTESQMMIHSKASNGR) is disordered. A compositionally biased stretch (polar residues) spans 344–357 (ESQMMIHSKASNGR).

This sequence belongs to the G-protein coupled receptor 1 family. As to quaternary structure, homodimer and heterodimer. Heterodimerizes with CXCR5; leading to modulate the interaction between of CXCL13 and CXCR5.

It localises to the cell membrane. Its function is as follows. G-protein coupled receptor expressed in lymphocytes that acts as a chemotactic receptor for B-cells, T-cells, splenic dendritic cells, monocytes/macrophages and astrocytes. Receptor for oxysterol 7-alpha,25-dihydroxycholesterol (7-alpha,25-OHC) and other related oxysterols. Mediates cell positioning and movement of a number of cells by binding the 7-alpha,25-OHC ligand that forms a chemotactic gradient. Binding of 7-alpha,25-OHC mediates the correct localization of B-cells during humoral immune responses. Guides B-cell movement along the B-cell zone-T-cell zone boundary and later to interfollicular and outer follicular regions. Its specific expression during B-cell maturation helps position B-cells appropriately for mounting T-dependent antibody responses. Collaborates with CXCR5 to mediate B-cell migration; probably by forming a heterodimer with CXCR5 that affects the interaction between of CXCL13 and CXCR5. Also acts as a chemotactic receptor for some T-cells upon binding to 7-alpha,25-OHC ligand. Promotes follicular helper T (Tfh) cells differentiation by positioning activated T-cells at the follicle-T-zone interface, promoting contact of newly activated CD4 T-cells with activated dendritic cells and exposing them to Tfh-cell-promoting inducible costimulator (ICOS) ligand. Expression in splenic dendritic cells is required for their homeostasis, localization and ability to induce B- and T-cell responses: GPR183 acts as a chemotactic receptor in dendritic cells that mediates the accumulation of CD4(+) dendritic cells in bridging channels. Regulates migration of astrocytes and is involved in communication between astrocytes and macrophages. Promotes osteoclast precursor migration to bone surfaces. Signals constitutively through G(i)-alpha, but not G(s)-alpha or G(q)-alpha. Signals constitutively also via MAPK1/3 (ERK1/2). This is G-protein coupled receptor 183 (Gpr183) from Rattus norvegicus (Rat).